We begin with the raw amino-acid sequence, 1297 residues long: Phosphoribosylformylglycinamidine synthase (1297 aa).

Residues 305–324 (FPGAATGSGGEIRDEGATGR) are disordered. 307-318 (GAATGSGGEIRD) is a binding site for ATP. Mg(2+)-binding residues include aspartate 679, glutamate 718, asparagine 722, and aspartate 886. Serine 888 serves as a coordination point for ATP. In terms of domain architecture, Glutamine amidotransferase type-1 spans 1044–1297 (IAVLREQGVN…LFRNARVFFK (254 aa)). Cysteine 1137 functions as the Nucleophile in the catalytic mechanism. Catalysis depends on residues histidine 1262 and glutamate 1264.

In the N-terminal section; belongs to the FGAMS family. In terms of assembly, monomer.

It is found in the cytoplasm. The catalysed reaction is N(2)-formyl-N(1)-(5-phospho-beta-D-ribosyl)glycinamide + L-glutamine + ATP + H2O = 2-formamido-N(1)-(5-O-phospho-beta-D-ribosyl)acetamidine + L-glutamate + ADP + phosphate + H(+). It participates in purine metabolism; IMP biosynthesis via de novo pathway; 5-amino-1-(5-phospho-D-ribosyl)imidazole from N(2)-formyl-N(1)-(5-phospho-D-ribosyl)glycinamide: step 1/2. Phosphoribosylformylglycinamidine synthase involved in the purines biosynthetic pathway. Catalyzes the ATP-dependent conversion of formylglycinamide ribonucleotide (FGAR) and glutamine to yield formylglycinamidine ribonucleotide (FGAM) and glutamate. This Mannheimia succiniciproducens (strain KCTC 0769BP / MBEL55E) protein is Phosphoribosylformylglycinamidine synthase.